Here is a 327-residue protein sequence, read N- to C-terminus: Delta(3,5)-Delta(2,4)-dienoyl-CoA isomerase, mitochondrial (327 aa).

Residues M1 to S33 constitute a mitochondrion transit peptide. Position 115-119 (S115–L119) interacts with substrate. Position 147 is an N6-acetyllysine (K147). G173 contacts substrate. Position 230 is an N6-succinyllysine (K230). S267 carries the phosphoserine modification. An N6-succinyllysine modification is found at K316. Positions S325–L327 match the Microbody targeting signal motif. An N6-acetyllysine modification is found at K326.

Belongs to the enoyl-CoA hydratase/isomerase family. Homohexamer.

The protein localises to the mitochondrion. It localises to the peroxisome. The catalysed reaction is (3E,5Z)-octadienoyl-CoA = (2E,4E)-octadienoyl-CoA. It carries out the reaction (3E,5Z,8Z,11Z,14Z)-eicosapentaenoyl-CoA = (2E,4E,8Z,11Z,14Z)-eicosapentaenoyl-CoA. It functions in the pathway lipid metabolism; fatty acid beta-oxidation. Isomerization of 3-trans,5-cis-dienoyl-CoA to 2-trans,4-trans-dienoyl-CoA. The sequence is that of Delta(3,5)-Delta(2,4)-dienoyl-CoA isomerase, mitochondrial from Mus musculus (Mouse).